The primary structure comprises 201 residues: Small ribosomal subunit protein uS4c (201 aa).

The disordered stretch occupies residues 17 to 36 (ALPGLTRKTPKSGSNLKKKF). The S4 RNA-binding domain maps to 89 to 157 (MRLDNILFRL…VQNYIASSDP (69 aa)).

It belongs to the universal ribosomal protein uS4 family. In terms of assembly, part of the 30S ribosomal subunit. Contacts protein S5. The interaction surface between S4 and S5 is involved in control of translational fidelity.

It is found in the plastid. It localises to the chloroplast. Functionally, one of the primary rRNA binding proteins, it binds directly to 16S rRNA where it nucleates assembly of the body of the 30S subunit. Its function is as follows. With S5 and S12 plays an important role in translational accuracy. The chain is Small ribosomal subunit protein uS4c (rps4) from Agrostis stolonifera (Creeping bentgrass).